Consider the following 753-residue polypeptide: 5-methyltetrahydropteroyltriglutamate--homocysteine methyltransferase (753 aa).

5-methyltetrahydropteroyltri-L-glutamate-binding positions include 17 to 20 (RELK) and Lys117. L-homocysteine contacts are provided by residues 431–433 (IGS) and Glu484. L-methionine is bound by residues 431-433 (IGS) and Glu484. Residues 515–516 (RC) and Trp561 contribute to the 5-methyltetrahydropteroyltri-L-glutamate site. Residue Asp599 participates in L-homocysteine binding. Asp599 is a binding site for L-methionine. Glu605 provides a ligand contact to 5-methyltetrahydropteroyltri-L-glutamate. Zn(2+)-binding residues include His641, Cys643, and Glu665. His694 serves as the catalytic Proton donor. Cys726 provides a ligand contact to Zn(2+).

Belongs to the vitamin-B12 independent methionine synthase family. The cofactor is Zn(2+).

The catalysed reaction is 5-methyltetrahydropteroyltri-L-glutamate + L-homocysteine = tetrahydropteroyltri-L-glutamate + L-methionine. It functions in the pathway amino-acid biosynthesis; L-methionine biosynthesis via de novo pathway; L-methionine from L-homocysteine (MetE route): step 1/1. Functionally, catalyzes the transfer of a methyl group from 5-methyltetrahydrofolate to homocysteine resulting in methionine formation. In Shigella sonnei (strain Ss046), this protein is 5-methyltetrahydropteroyltriglutamate--homocysteine methyltransferase.